We begin with the raw amino-acid sequence, 284 residues long: Tropomyosin (284 aa).

Residues 1–284 (MDGIKKKMIA…DQTFAELTGY (284 aa)) are a coiled coil. Composition is skewed to basic and acidic residues over residues 29-42 (LKQKEEEQEKKETE) and 111-136 (AKFDEASKTAEESERGRKELEIRSIA). Disordered regions lie at residues 29-49 (LKQKEEEQEKKETEIGELNNR) and 111-149 (AKFDEASKTAEESERGRKELEIRSIADDEGLSQLEDQQK).

This sequence belongs to the tropomyosin family.

Its function is as follows. Tropomyosin, in association with the troponin complex, plays a central role in the calcium dependent regulation of muscle contraction. This Clonorchis sinensis (Chinese liver fluke) protein is Tropomyosin.